A 424-amino-acid chain; its full sequence is 3-phosphoshikimate 1-carboxyvinyltransferase (424 aa).

3-phosphoshikimate-binding residues include lysine 20, serine 21, and arginine 25. Lysine 20 lines the phosphoenolpyruvate pocket. Phosphoenolpyruvate-binding residues include glycine 92 and arginine 120. 3-phosphoshikimate is bound by residues serine 165, glutamine 167, aspartate 313, and lysine 340. Glutamine 167 contacts phosphoenolpyruvate. Aspartate 313 (proton acceptor) is an active-site residue. Residues arginine 344 and arginine 386 each contribute to the phosphoenolpyruvate site.

It belongs to the EPSP synthase family. As to quaternary structure, monomer.

The protein resides in the cytoplasm. The enzyme catalyses 3-phosphoshikimate + phosphoenolpyruvate = 5-O-(1-carboxyvinyl)-3-phosphoshikimate + phosphate. It participates in metabolic intermediate biosynthesis; chorismate biosynthesis; chorismate from D-erythrose 4-phosphate and phosphoenolpyruvate: step 6/7. Its function is as follows. Catalyzes the transfer of the enolpyruvyl moiety of phosphoenolpyruvate (PEP) to the 5-hydroxyl of shikimate-3-phosphate (S3P) to produce enolpyruvyl shikimate-3-phosphate and inorganic phosphate. This is 3-phosphoshikimate 1-carboxyvinyltransferase from Bacillus cytotoxicus (strain DSM 22905 / CIP 110041 / 391-98 / NVH 391-98).